A 328-amino-acid polypeptide reads, in one-letter code: Tyrosine--tRNA ligase (328 aa).

Y33 contributes to the L-tyrosine binding site. The 'HIGH' region signature appears at 38 to 46 (PSGVLHIGH). The L-tyrosine site is built by Y154, Q158, D161, and Q176. The disordered stretch occupies residues 193–227 (EPPTSLHTPLIADLGTGRGKMSSSEGVTISMEDSR). The short motif at 212–216 (KMSSS) is the 'KMSKS' region element. S215 contributes to the ATP binding site.

The protein belongs to the class-I aminoacyl-tRNA synthetase family. TyrS type 3 subfamily. Homodimer.

The protein resides in the cytoplasm. It catalyses the reaction tRNA(Tyr) + L-tyrosine + ATP = L-tyrosyl-tRNA(Tyr) + AMP + diphosphate + H(+). Catalyzes the attachment of tyrosine to tRNA(Tyr) in a two-step reaction: tyrosine is first activated by ATP to form Tyr-AMP and then transferred to the acceptor end of tRNA(Tyr). The sequence is that of Tyrosine--tRNA ligase from Halorubrum lacusprofundi (strain ATCC 49239 / DSM 5036 / JCM 8891 / ACAM 34).